A 233-amino-acid chain; its full sequence is Lipoprotein-releasing system ATP-binding protein LolD (233 aa).

The region spanning 6–233 (LQCDNLCKRY…TAELSLMGAE (228 aa)) is the ABC transporter domain. 42–49 (GSSGSGKS) lines the ATP pocket.

This sequence belongs to the ABC transporter superfamily. Lipoprotein translocase (TC 3.A.1.125) family. As to quaternary structure, the complex is composed of two ATP-binding proteins (LolD) and two transmembrane proteins (LolC and LolE).

Its subcellular location is the cell inner membrane. Functionally, part of the ABC transporter complex LolCDE involved in the translocation of mature outer membrane-directed lipoproteins, from the inner membrane to the periplasmic chaperone, LolA. Responsible for the formation of the LolA-lipoprotein complex in an ATP-dependent manner. The protein is Lipoprotein-releasing system ATP-binding protein LolD of Escherichia coli O6:K15:H31 (strain 536 / UPEC).